Consider the following 441-residue polypeptide: Serine carboxypeptidase-like 1 (441 aa).

An N-terminal signal peptide occupies residues 1 to 29; sequence MANKYVSSVLKSLLVLLHLVFLSKQHVDS. Intrachain disulfides connect Cys88–Cys331, Cys252–Cys266, and Cys290–Cys297. N-linked (GlcNAc...) asparagine glycosylation occurs at Asn109. Ser184 is an active-site residue. An N-linked (GlcNAc...) asparagine glycan is attached at Asn350. The active site involves Asp366. The N-linked (GlcNAc...) asparagine glycan is linked to Asn382. His419 is a catalytic residue.

The protein belongs to the peptidase S10 family. As to expression, expressed in seedlings and roots.

It localises to the secreted. Its function is as follows. Probable carboxypeptidase. The chain is Serine carboxypeptidase-like 1 (SCPL1) from Arabidopsis thaliana (Mouse-ear cress).